The following is a 237-amino-acid chain: Mitochondrial carrier-like protein L276 (237 aa).

Solcar repeat units follow at residues 1–83 (MAKY…FENK), 85–161 (YPYT…LNEY), and 164–233 (KPVV…LNKK). 5 consecutive transmembrane segments (helical) span residues 11–27 (AIAT…ICTF), 60–76 (VPAI…KYFL), 91–108 (MING…THPI), 140–160 (SFGK…TLNE), and 166–183 (VVSS…MQPL). Positions 191-196 (IYGLSL) match the Substrate recognition motif. The chain crosses the membrane as a helical span at residues 205-226 (YYRGLSLNLMRIVPHFVITMTT).

The protein belongs to the mitochondrial carrier (TC 2.A.29) family.

It localises to the host mitochondrion inner membrane. Transports dATP and to a lesser extent dTTP, TTP, UTP and ADP, possibly across the mitochondrial inner membrane. The polypeptide is Mitochondrial carrier-like protein L276 (Acanthamoeba polyphaga (Amoeba)).